A 122-amino-acid chain; its full sequence is Large ribosomal subunit protein uL14 (122 aa).

Belongs to the universal ribosomal protein uL14 family. As to quaternary structure, part of the 50S ribosomal subunit. Forms a cluster with proteins L3 and L19. In the 70S ribosome, L14 and L19 interact and together make contacts with the 16S rRNA in bridges B5 and B8.

Its function is as follows. Binds to 23S rRNA. Forms part of two intersubunit bridges in the 70S ribosome. The sequence is that of Large ribosomal subunit protein uL14 from Lactobacillus acidophilus (strain ATCC 700396 / NCK56 / N2 / NCFM).